The following is a 122-amino-acid chain: Large ribosomal subunit protein uL14 (122 aa).

This sequence belongs to the universal ribosomal protein uL14 family. In terms of assembly, part of the 50S ribosomal subunit. Forms a cluster with proteins L3 and L19. In the 70S ribosome, L14 and L19 interact and together make contacts with the 16S rRNA in bridges B5 and B8.

In terms of biological role, binds to 23S rRNA. Forms part of two intersubunit bridges in the 70S ribosome. The chain is Large ribosomal subunit protein uL14 from Nitrosococcus oceani (strain ATCC 19707 / BCRC 17464 / JCM 30415 / NCIMB 11848 / C-107).